The chain runs to 330 residues: Aspartate--ammonia ligase (330 aa).

The protein belongs to the class-II aminoacyl-tRNA synthetase family. AsnA subfamily.

It is found in the cytoplasm. The enzyme catalyses L-aspartate + NH4(+) + ATP = L-asparagine + AMP + diphosphate + H(+). The protein operates within amino-acid biosynthesis; L-asparagine biosynthesis; L-asparagine from L-aspartate (ammonia route): step 1/1. This is Aspartate--ammonia ligase from Shigella flexneri serotype 5b (strain 8401).